The following is a 707-amino-acid chain: Protein SGM1 (707 aa).

Residues 1 to 11 (MSKKLSLEERL) are compositionally biased toward basic and acidic residues. Residues 1-52 (MSKKLSLEERLSLATKKGRKKNKRSTSNLSSPSPVVLSNNEQESARTSIDDA) are disordered. Residue Ser2 is modified to N-acetylserine. Positions 27 to 40 (SNLSSPSPVVLSNN) are enriched in low complexity. Residues 122–473 (VEELVKEISP…KPHQENSNEK (352 aa)) adopt a coiled-coil conformation. Ser151, Ser538, Ser549, Ser568, Ser571, Ser576, and Ser589 each carry phosphoserine. Residues 594–706 (SAHLVNKLST…QQMVEMQGKM (113 aa)) are a coiled coil.

The protein belongs to the SGM1 family. As to quaternary structure, interacts with YPT6.

It localises to the golgi apparatus. Functionally, required for normal growth rate on galactose and mannose. The chain is Protein SGM1 (SGM1) from Saccharomyces cerevisiae (strain ATCC 204508 / S288c) (Baker's yeast).